We begin with the raw amino-acid sequence, 86 residues long: Insulin-related peptide 2 (86 aa).

The N-terminal stretch at 1–19 is a signal peptide; sequence MKFYIVFALILACAACVSS. Positions 20 to 43 are excised as a propeptide; that stretch reads QEGTNFYCGRQLSRTLALVCWGAE. Arginine 63 carries the post-translational modification Arginine amide. The propeptide occupies 67–86; the sequence is GPVDECCLKPCSIEEMLTYC.

Belongs to the insulin family. As to expression, DAGWWVPPQSARALGGGR-amide: Expressed in corpora cardiaca (CC), corpora allata (CA), antennal lobe (AL) and gnathal ganglion (GNG) (at protein level). Expression in CC and CA detected in most animals, in AL in some animals and in GNG in few animals (at protein level).

The protein resides in the secreted. The sequence is that of Insulin-related peptide 2 from Agrotis ipsilon (Black cutworm moth).